Consider the following 181-residue polypeptide: MSTAASDSGVEKLVEENKREEVKKNEEEKEFDLGLEENPDSVKKPRKRLAKFDEERLISENGIPKLRKMMRKVKLKGKGHEAKDLKQLLGMYHIWTHELYPRATFDDSISYLKTLGKHRSVKVRRRGWINEIAVENGSDSNASLFTGPSSNSLVNLTSGDPYVQDTADDAFVAQDNDTQLE.

The segment at 1–47 (MSTAASDSGVEKLVEENKREEVKKNEEEKEFDLGLEENPDSVKKPRK) is disordered. Over residues 9–27 (GVEKLVEENKREEVKKNEE) the composition is skewed to basic and acidic residues. Residues 28-39 (EKEFDLGLEENP) are compositionally biased toward acidic residues.

It belongs to the CSM3 family. Fork protection complex (FPC) consisting of swi1 and swi3 interacts with mat1 cis-acting sequences and mat1-proximal polar-terminator of replication (RTS1).

Its subcellular location is the nucleus. In terms of biological role, forms a fork protection complex (FPC) with swi1. FPC coordinates leading and lagging strand synthesis and moves with the replication fork. It is required for programmed fork-pausing which is necessary for mating-type switching. FPC stabilizes replication forks in a configuration that is recognized by replication checkpoint sensors. It is involved in termination at the mat1-proximal polar-terminator of replication (RTS1) and also required for activation of the Rad53-like checkpoint kinase cds1. The protein is Swi1-interacting protein swi3 (swi3) of Schizosaccharomyces pombe (strain 972 / ATCC 24843) (Fission yeast).